The sequence spans 1580 residues: Collagen alpha-1(XVI) chain (1580 aa).

Residues 1–21 (MLTSWAPGLWVLGLWATFSHG) form the signal peptide. A glycan (N-linked (GlcNAc...) asparagine) is linked at Asn47. The Laminin G-like domain occupies 50–231 (GFNLIRRLNL…LQQAHIYCDP (182 aa)). The tract at residues 232-374 (ELVLEEGCCE…SPDAPLQCVE (143 aa)) is nonhelical region 10 (NC10). Residues 324-547 (RESNVTLGPS…DPAPAWEGLG (224 aa)) are disordered. An N-linked (GlcNAc...) asparagine glycan is attached at Asn327. Residues 375–424 (GPKGEKGESGDLGPPGLPGPTGQKGQKGEKGDGGLKGLPGKPGRDGRPGE) form the Collagen-like 1 domain. Residues 375-509 (GPKGEKGESG…PGTKGEKGDP (135 aa)) form a triple-helical region 9 (COL9) with 3 imperfections region. The span at 449-460 (PGPPGLPGPPGI) shows a compositional bias: pro residues. Residues 486–495 (GKEGPGGKPG) show a composition bias toward gly residues. Positions 510–524 (CEVCPTLPEGSQNFV) are nonhelical region 9 (NC9). Positions 525–570 (GLPGKPGPKGEPGDPAPAWEGLGTVGLKGDRGDPGIQGMKGEKGEP) are triple-helical region 8 (COL8) with 1 imperfection. A Cell attachment site motif is present at residues 555–557 (RGD). The tract at residues 571–586 (CSSCSSGVGAQHLGPS) is nonhelical region 8 (NC8). Residues 585–598 (PSPGHGLPGLPGTS) are compositionally biased toward low complexity. Residues 585–935 (PSPGHGLPGL…LPGQPGLTAE (351 aa)) are disordered. Residues 587–640 (PGHGLPGLPGTSGIPGPRGLKGEKGSFGDTGPAGVPGSPGPVGPAGIKGAKGEP) form a triple-helical region 7 (COL7) with 1 imperfection region. Collagen-like domains lie at 590–643 (GLPG…PCEP) and 676–725 (GLPG…PAGP). A nonhelical region 7 (NC7) region spans residues 641–661 (CEPCTALSELQDGDMRVVHLP). Residues 662-732 (GPAGEKGEPG…AGPKGEKGDG (71 aa)) are triple-helical region 6 (COL6) with 1 imperfection. Positions 683–693 (KAGERGLKGQK) are enriched in basic and acidic residues. The segment covering 698–714 (NPGDPGTPGITGQPGIS) has biased composition (low complexity). The segment at 733–747 (CTACPSLQGALTDVS) is nonhelical region 6 (NC6). Positions 748–870 (GLPGKPGPKG…RGEKGEPGEC (123 aa)) are triple-helical region 5 (COL5) with 3 imperfections. The Collagen-like 4 domain maps to 797–848 (GAEGPQGEPGTQGLPGTQGLPGPRGPPGSAGEKGAQGSPGPKGAIGPMGPPG). Over residues 801–817 (PQGEPGTQGLPGTQGLP) the composition is skewed to low complexity. Positions 871–881 (SCPSRGEPIFS) are nonhelical region 5 (NC5). The tract at residues 882-933 (GMPGAPGLWMGSSSQPGPQGPPGVPGPPGPPGMPGLQGVPGHNGLPGQPGLT) is triple-helical region 4 (COL4) with 2 imperfections. The segment covering 899–914 (PQGPPGVPGPPGPPGM) has biased composition (pro residues). The interval 934 to 967 (AELGSLPIEKHLLKSICGDCAQGQTAHPAFLLEK) is nonhelical region 4 (NC4). Residues 968 to 982 (GEKGDQGIPGVPGFD) are triple-helical region 3 (COL3). Positions 983 to 1005 (NCARCFIERERPRAEEARGDNSE) are nonhelical region 3 (NC3). Disordered regions lie at residues 995–1405 (RAEE…LPGS) and 1445–1523 (AAAP…GYGK). Residues 1000–1002 (RGD) carry the Cell attachment site motif. The 58-residue stretch at 1006 to 1063 (GEPGCSGSPGLPGPPGMPGQRGEEGPPGMRGSPGPPGPIGLQGERGLTGLTGDKGEPG) folds into the Collagen-like 5 domain. Residues 1006–1409 (GEPGCSGSPG…PGLPGSMGDM (404 aa)) are triple-helical region 2 (COL2) with 2 imperfections. Positions 1098–1107 (SGPPGSEGLP) are enriched in low complexity. 2 stretches are compositionally biased toward pro residues: residues 1139-1148 (FPGPPGPPGF) and 1178-1187 (SPGPPGPPGI). Basic and acidic residues predominate over residues 1196–1205 (LDGKDGKPGL). Positions 1206 to 1208 (RGD) match the Cell attachment site motif. The Collagen-like 6 domain maps to 1210 to 1263 (GPAGPPGLMGPPGFKGKTGHPGLPGPKGDCGKPGPPGSSGRPGAEGEPGAMGPQ). Residues 1247–1263 (SSGRPGAEGEPGAMGPQ) are compositionally biased toward low complexity. A compositionally biased stretch (pro residues) spans 1265 to 1281 (RPGPPGHLGPPGQPGPP). 3 consecutive Collagen-like domains span residues 1350–1407 (GQKG…GSMG), 1448–1500 (PGRP…GDIG), and 1504–1552 (AGEN…GKAG). Residues 1362–1371 (GMPGGPGKSG) show a composition bias toward gly residues. Low complexity predominate over residues 1396–1405 (NPGLPGLPGS). The interval 1410–1448 (VNYDDIKRFIRQEIIKLFDERMAYYTSRMQFPMEVAAAP) is nonhelical region 2 (NC2). The tract at residues 1449–1554 (GRPGPPGKDG…MGQPGKAGHC (106 aa)) is triple-helical region 1 (COL1) with 2 imperfections. The segment at 1555–1580 (NPSDCFGAMPMEQQYPPMKSMKGPFG) is nonhelical region 1 (NC1).

The protein belongs to the fibril-associated collagens with interrupted helices (FACIT) family. In terms of assembly, homotrimer. Interacts with FBN1, fibronectin and integrins ITGA1/ITGB1 and ITGA2/ITGB1. Integrin ITGA1/ITGB1 binds to a unique site within COL16A1 located close to its C-terminal end between collagenous domains COL1-COL3. Post-translationally, prolines at the third position of the tripeptide repeating unit (G-X-Y) are hydroxylated in some or all of the chains. Glycosylated. Expressed in most tissues examined with highest levels of expression observed in heart. Strongly expressed in cortical and medullar regions of kidney and more weakly expressed in lung. Also detected in the ciliary muscle of the eye, on the serosa layer lining the muscularis externa of intestinal tissue, and in the perimysium membrane lining both the cardiac muscle bundle and the smooth muscle tissue of the small intestine. Strongly stained in particulate or granular structures. Not detected in brain or skeletal muscle.

The protein resides in the secreted. The protein localises to the extracellular space. Its subcellular location is the extracellular matrix. Its function is as follows. Involved in mediating cell attachment and inducing integrin-mediated cellular reactions, such as cell spreading and alterations in cell morphology. This Mus musculus (Mouse) protein is Collagen alpha-1(XVI) chain.